The following is a 241-amino-acid chain: B9 domain-containing protein 1 (241 aa).

The tract at residues 1-42 (MSASEGISLPGNEETTPPHEKHKQKAKKAKKKSRSAKESVPN) is disordered. Residues 20–34 (EKHKQKAKKAKKKSR) are compositionally biased toward basic residues. In terms of domain architecture, C2 B9-type spans 53–197 (FSLSIVGQIV…TSWLLRREPE (145 aa)).

It belongs to the B9D family. Probable component of the tectonic-like complex (also named MKS complex), composed of B9d1, B9d2, Cc2d2a, Mks1 and tctn. As to expression, expressed in type I sensory neurons (at protein level). Expressed in spermatids and spermatocytes (at protein level).

It is found in the cytoplasm. The protein resides in the cytoskeleton. The protein localises to the cilium basal body. Its function is as follows. Probable component of the tectonic-like complex (also named MKS complex), a complex localized at the transition zone of primary cilia. Required for ciliary structure and function. The protein is B9 domain-containing protein 1 of Drosophila melanogaster (Fruit fly).